The primary structure comprises 108 residues: Sperm-egg fusion protein LLCFC1 (108 aa).

Positions 1–30 are cleaved as a signal peptide; sequence MTSLGSQLHRATFLTALLLLLLLQVKGVKT. Residues 39-49 show a composition bias toward basic and acidic residues; sequence GDKSQKDKVSS. Positions 39–64 are disordered; the sequence is GDKSQKDKVSSEDQGEEEYEEHFEAS.

Detected in testicular germ cells and spermatozoa (at protein level). Abundantly expressed in testis.

It is found in the secreted. Functionally, sperm protein required for fusion of sperm with the egg membrane during fertilization. In Mus musculus (Mouse), this protein is Sperm-egg fusion protein LLCFC1.